Consider the following 1128-residue polypeptide: Probable serine/threonine-protein kinase DDB_G0283337 (1128 aa).

Over residues 1–17 (MENNNNNNINKTNTPNN) the composition is skewed to low complexity. 5 disordered regions span residues 1–21 (MENN…SFSP), 60–100 (INHN…NNNN), 131–151 (RESN…NNSN), 236–256 (NNSK…SNSN), and 375–504 (NDNE…NSEQ). Low complexity-rich tracts occupy residues 243–256 (NSSN…SNSN) and 375–502 (NDNE…NNNS). The region spanning 777 to 1054 (LSDFSIIGEG…EIQKCKEEYE (278 aa)) is the Protein kinase domain. ATP-binding positions include 783–791 (IGEGGFSTV) and K809. D904 acts as the Proton acceptor in catalysis.

The protein belongs to the protein kinase superfamily. Ser/Thr protein kinase family.

The catalysed reaction is L-seryl-[protein] + ATP = O-phospho-L-seryl-[protein] + ADP + H(+). The enzyme catalyses L-threonyl-[protein] + ATP = O-phospho-L-threonyl-[protein] + ADP + H(+). The sequence is that of Probable serine/threonine-protein kinase DDB_G0283337 from Dictyostelium discoideum (Social amoeba).